A 179-amino-acid polypeptide reads, in one-letter code: Replication restart protein DnaT (179 aa).

Positions 156–179 are disordered; that stretch reads GGLPKRDVNTVSEPDSQIPPGFRG.

It belongs to the DnaT family. In terms of assembly, homooligomerizes. Interacts with PriB. Component of the replication restart primosome. Primosome assembly occurs via a 'hand-off' mechanism. PriA binds to replication forks, subsequently PriB then DnaT bind; DnaT then displaces ssDNA to generate the helicase loading substrate.

In terms of biological role, involved in the restart of stalled replication forks, which reloads the replicative helicase on sites other than the origin of replication. Can function in multiple replication restart pathways. Displaces ssDNA from a PriB-ssDNA complex. Probably forms a spiral filament on ssDNA. The sequence is that of Replication restart protein DnaT from Escherichia coli O1:K1 / APEC.